A 387-amino-acid polypeptide reads, in one-letter code: Paralemmin-1 (387 aa).

Position 1 is an N-acetylmethionine (Met1). Residues 9–101 (TSQQERLQAI…EKEIEVLERG (93 aa)) are a coiled coil. Basic and acidic residues-rich tracts occupy residues 31-41 (KRRQLEDERRQ) and 69-102 (DLRR…ERGD). A disordered region spans residues 31 to 160 (KRRQLEDERR…VSNTPLRTVD (130 aa)). Positions 104–117 (APATAKENAAAPSP) are enriched in low complexity. 2 positions are modified to phosphoserine: Ser116 and Ser124. Thr141 and Thr145 each carry phosphothreonine. Position 162 is a phosphoserine (Ser162). Position 243 is a phosphothreonine (Thr243). Ser245 is modified (phosphoserine). Disordered stretches follow at residues 247 to 296 (AGST…GQEP) and 335 to 378 (AEPK…DMKK). Positions 286–296 (GPPGIQPGQEP) are enriched in low complexity. Ser346 carries the post-translational modification Phosphoserine. Thr367 carries the phosphothreonine modification. The residue at position 369 (Ser369) is a Phosphoserine. 2 S-palmitoyl cysteine lipidation sites follow: Cys381 and Cys383. Cys384 is subject to Cysteine methyl ester. Cys384 is lipidated: S-farnesyl cysteine. The propeptide at 385–387 (SIM) is removed in mature form.

This sequence belongs to the paralemmin family. In terms of assembly, interacts with dopamine receptor DRD3. In terms of tissue distribution, widely expressed with highest expression in brain and testis and intermediate expression in heart and adrenal gland.

The protein localises to the cell membrane. It is found in the cell projection. Its subcellular location is the filopodium membrane. The protein resides in the axon. It localises to the dendrite. The protein localises to the dendritic spine. It is found in the basolateral cell membrane. Its subcellular location is the apicolateral cell membrane. Involved in plasma membrane dynamics and cell process formation. Isoform 1 and isoform 2 are necessary for axonal and dendritic filopodia induction, for dendritic spine maturation and synapse formation in a palmitoylation-dependent manner. This is Paralemmin-1 (PALM) from Homo sapiens (Human).